The following is a 717-amino-acid chain: RNA helicase NPH-II (717 aa).

The Helicase ATP-binding domain occupies 193 to 384; it reads FEIFISKKNC…IYFKNIVEIY (192 aa). 206 to 213 is an ATP binding site; it reads GGTGIGKT. A DEXH box motif is present at residues 331 to 334; it reads DEIH. A Helicase C-terminal domain is found at 406–566; it reads ILKNYMPSVG…VFKYNNMDYY (161 aa).

It belongs to the DEAD box helicase family. DEAH subfamily. Monomer.

Its subcellular location is the virion. The catalysed reaction is ATP + H2O = ADP + phosphate + H(+). Its function is as follows. NTP-dependent helicase that catalyzes unidirectional unwinding of 3'tailed duplex RNAs and plays an important role during transcription of early mRNAs, presumably by preventing R-loop formation behind the elongating RNA polymerase. Might also play a role in the export of newly synthesized mRNA chains out of the core into the cytoplasm. Required for replication and propagation of viral particles. The chain is RNA helicase NPH-II (NPH2) from Melanoplus sanguinipes (Migratory grasshopper).